The primary structure comprises 363 residues: Bonnadiene synthase (363 aa).

Residues D93, D98, N234, S238, and E242 each contribute to the Mg(2+) site.

This sequence belongs to the terpene synthase family. Requires Mg(2+) as cofactor.

The catalysed reaction is (2E,6E,10E)-geranylgeranyl diphosphate = bonnadiene + diphosphate. It participates in secondary metabolite biosynthesis; terpenoid biosynthesis. Functionally, diterpene synthase that catalyzes the conversion of geranylgeranyl diphosphate (GGPP) to bonnadiene. Cannot use geranyl diphosphate (GPP), farnesyl diphosphate (FPP) and geranylfarnesyl diphosphate (GFPP). This is Bonnadiene synthase from Allokutzneria albata (Kibdelosporangium albatum).